A 187-amino-acid chain; its full sequence is Elongation factor P (187 aa).

Belongs to the elongation factor P family.

It is found in the cytoplasm. It participates in protein biosynthesis; polypeptide chain elongation. Its function is as follows. Involved in peptide bond synthesis. Stimulates efficient translation and peptide-bond synthesis on native or reconstituted 70S ribosomes in vitro. Probably functions indirectly by altering the affinity of the ribosome for aminoacyl-tRNA, thus increasing their reactivity as acceptors for peptidyl transferase. This is Elongation factor P from Pseudarthrobacter chlorophenolicus (strain ATCC 700700 / DSM 12829 / CIP 107037 / JCM 12360 / KCTC 9906 / NCIMB 13794 / A6) (Arthrobacter chlorophenolicus).